An 86-amino-acid polypeptide reads, in one-letter code: Large ribosomal subunit protein bL27 (86 aa).

Positions methionine 1–phenylalanine 26 are disordered.

This sequence belongs to the bacterial ribosomal protein bL27 family.

The chain is Large ribosomal subunit protein bL27 from Bdellovibrio bacteriovorus (strain ATCC 15356 / DSM 50701 / NCIMB 9529 / HD100).